The following is a 20-amino-acid chain: Cytochrome c oxidase subunit 5A-1, mitochondrial (20 aa).

The protein belongs to the cytochrome c oxidase subunit 5A family. In terms of assembly, component of the cytochrome c oxidase (complex IV, CIV), a multisubunit enzyme composed of 14 subunits. The complex is composed of a catalytic core of 3 subunits MT-CO1, MT-CO2 and MT-CO3, encoded in the mitochondrial DNA, and 11 supernumerary subunits COX4I, COX5A, COX5B, COX6A, COX6B, COX6C, COX7A, COX7B, COX7C, COX8 and NDUFA4, which are encoded in the nuclear genome. The complex exists as a monomer or a dimer and forms supercomplexes (SCs) in the inner mitochondrial membrane with NADH-ubiquinone oxidoreductase (complex I, CI) and ubiquinol-cytochrome c oxidoreductase (cytochrome b-c1 complex, complex III, CIII), resulting in different assemblies (supercomplex SCI(1)III(2)IV(1) and megacomplex MCI(2)III(2)IV(2)). Interacts with AFG1L. Interacts with RAB5IF.

It is found in the mitochondrion inner membrane. The protein operates within energy metabolism; oxidative phosphorylation. Component of the cytochrome c oxidase, the last enzyme in the mitochondrial electron transport chain which drives oxidative phosphorylation. The respiratory chain contains 3 multisubunit complexes succinate dehydrogenase (complex II, CII), ubiquinol-cytochrome c oxidoreductase (cytochrome b-c1 complex, complex III, CIII) and cytochrome c oxidase (complex IV, CIV), that cooperate to transfer electrons derived from NADH and succinate to molecular oxygen, creating an electrochemical gradient over the inner membrane that drives transmembrane transport and the ATP synthase. Cytochrome c oxidase is the component of the respiratory chain that catalyzes the reduction of oxygen to water. Electrons originating from reduced cytochrome c in the intermembrane space (IMS) are transferred via the dinuclear copper A center (CU(A)) of subunit 2 and heme A of subunit 1 to the active site in subunit 1, a binuclear center (BNC) formed by heme A3 and copper B (CU(B)). The BNC reduces molecular oxygen to 2 water molecules using 4 electrons from cytochrome c in the IMS and 4 protons from the mitochondrial matrix. The chain is Cytochrome c oxidase subunit 5A-1, mitochondrial from Thunnus obesus (Bigeye tuna).